A 457-amino-acid polypeptide reads, in one-letter code: Bifunctional protein GlmU (457 aa).

The pyrophosphorylase stretch occupies residues 1-230; it reads MPLSLPLHIV…AQEVEGVNDL (230 aa). UDP-N-acetyl-alpha-D-glucosamine is bound by residues 12–15, Lys-26, Gln-78, 83–84, 105–107, Gly-140, Glu-155, Asn-170, and Asn-228; these read LAAG, GT, and YGD. Mg(2+) is bound at residue Asp-107. Position 228 (Asn-228) interacts with Mg(2+). Positions 231–251 are linker; sequence WQLTQLERAWQIRAARALCLQ. Residues 252–457 are N-acetyltransferase; the sequence is GARVADPARL…DGWQRPKKKT (206 aa). Positions 334 and 352 each coordinate UDP-N-acetyl-alpha-D-glucosamine. His-364 serves as the catalytic Proton acceptor. UDP-N-acetyl-alpha-D-glucosamine contacts are provided by Tyr-367 and Asn-378. Residues Ala-381, 387 to 388, Ser-406, Ala-424, and Arg-441 contribute to the acetyl-CoA site; that span reads NY.

It in the N-terminal section; belongs to the N-acetylglucosamine-1-phosphate uridyltransferase family. In the C-terminal section; belongs to the transferase hexapeptide repeat family. As to quaternary structure, homotrimer. Mg(2+) is required as a cofactor.

It is found in the cytoplasm. It carries out the reaction alpha-D-glucosamine 1-phosphate + acetyl-CoA = N-acetyl-alpha-D-glucosamine 1-phosphate + CoA + H(+). It catalyses the reaction N-acetyl-alpha-D-glucosamine 1-phosphate + UTP + H(+) = UDP-N-acetyl-alpha-D-glucosamine + diphosphate. The protein operates within nucleotide-sugar biosynthesis; UDP-N-acetyl-alpha-D-glucosamine biosynthesis; N-acetyl-alpha-D-glucosamine 1-phosphate from alpha-D-glucosamine 6-phosphate (route II): step 2/2. It participates in nucleotide-sugar biosynthesis; UDP-N-acetyl-alpha-D-glucosamine biosynthesis; UDP-N-acetyl-alpha-D-glucosamine from N-acetyl-alpha-D-glucosamine 1-phosphate: step 1/1. Its pathway is bacterial outer membrane biogenesis; LPS lipid A biosynthesis. Catalyzes the last two sequential reactions in the de novo biosynthetic pathway for UDP-N-acetylglucosamine (UDP-GlcNAc). The C-terminal domain catalyzes the transfer of acetyl group from acetyl coenzyme A to glucosamine-1-phosphate (GlcN-1-P) to produce N-acetylglucosamine-1-phosphate (GlcNAc-1-P), which is converted into UDP-GlcNAc by the transfer of uridine 5-monophosphate (from uridine 5-triphosphate), a reaction catalyzed by the N-terminal domain. This Xylella fastidiosa (strain M23) protein is Bifunctional protein GlmU.